A 269-amino-acid chain; its full sequence is Cytochrome c oxidase subunit 3 (269 aa).

Residues 1–22 (MTHLERSRHQQHPFHMVMPSPW) are Mitochondrial matrix-facing. The helical transmembrane segment at 23 to 41 (PIVVSFALLSLALSTALTM) threads the bilayer. Residues 42 to 48 (HGYIGNM) lie on the Mitochondrial intermembrane side of the membrane. The chain crosses the membrane as a helical span at residues 49–73 (NMVYLALFVLLTSSILWFRDIVAEA). At 74-80 (TYLGDHT) the chain is on the mitochondrial matrix side. A helical transmembrane segment spans residues 81-114 (MAVRKGINLGFLMFVLSEVLIFAGLFWAYFHSAM). Topologically, residues 115 to 137 (SPDVTLGACWPPVGIEAVQPTEL) are mitochondrial intermembrane. A helical transmembrane segment spans residues 138 to 161 (PLLNTIILLSSGATVTYSHHALIA). The Mitochondrial matrix segment spans residues 162 to 164 (GNR). The helical transmembrane segment at 165-188 (NKALSGLLITFWLIVIFVTCQYIE) threads the bilayer. Over 189-201 (YTNAAFTISDGVY) the chain is Mitochondrial intermembrane. A helical transmembrane segment spans residues 202–230 (GSVFYAGTGLHFLHMVMLAAMLGVNYWRM). Residues 231 to 248 (RNYHLTAGHHVGYETTII) are Mitochondrial matrix-facing. A helical membrane pass occupies residues 249–265 (YTHVLDVIWLFLYVVFY). The Mitochondrial intermembrane segment spans residues 266-269 (WWGV).

The protein belongs to the cytochrome c oxidase subunit 3 family. In terms of assembly, component of the cytochrome c oxidase (complex IV, CIV), a multisubunit enzyme composed of 12 subunits. The complex is composed of a catalytic core of 3 subunits COX1, COX2 and COX3, encoded in the mitochondrial DNA, and 9 supernumerary subunits COX4, COX5A (or COX5B), COX6, COX7, COX8, COX9, COX12, COX13 and COX26, which are encoded in the nuclear genome. The complex exists as a monomer or a dimer and forms supercomplexes (SCs) in the inner mitochondrial membrane with a dimer of ubiquinol-cytochrome c oxidoreductase (cytochrome b-c1 complex, complex III, CIII), resulting in 2 different assemblies (supercomplexes III(2)IV and III(2)IV(2)). In terms of processing, the N-terminus is blocked.

It localises to the mitochondrion inner membrane. The enzyme catalyses 4 Fe(II)-[cytochrome c] + O2 + 8 H(+)(in) = 4 Fe(III)-[cytochrome c] + 2 H2O + 4 H(+)(out). Its function is as follows. Component of the cytochrome c oxidase, the last enzyme in the mitochondrial electron transport chain which drives oxidative phosphorylation. The respiratory chain contains 3 multisubunit complexes succinate dehydrogenase (complex II, CII), ubiquinol-cytochrome c oxidoreductase (cytochrome b-c1 complex, complex III, CIII) and cytochrome c oxidase (complex IV, CIV), that cooperate to transfer electrons derived from NADH and succinate to molecular oxygen, creating an electrochemical gradient over the inner membrane that drives transmembrane transport and the ATP synthase. Cytochrome c oxidase is the component of the respiratory chain that catalyzes the reduction of oxygen to water. Electrons originating from reduced cytochrome c in the intermembrane space (IMS) are transferred via the dinuclear copper A center (CU(A)) of COX2 and heme A of COX1 to the active site in COX1, a binuclear center (BNC) formed by heme A3 and copper B (CU(B)). The BNC reduces molecular oxygen to 2 water molecules using 4 electrons from cytochrome c in the IMS and 4 protons from the mitochondrial matrix. COX3 is a catalytic core subunit. This Saccharomyces cerevisiae (strain ATCC 204508 / S288c) (Baker's yeast) protein is Cytochrome c oxidase subunit 3 (COX3).